We begin with the raw amino-acid sequence, 534 residues long: Arginine--tRNA ligase (534 aa).

A 'HIGH' region motif is present at residues 120–130 (ANPTGFLHLGH).

The protein belongs to the class-I aminoacyl-tRNA synthetase family. In terms of assembly, monomer.

It localises to the cytoplasm. The catalysed reaction is tRNA(Arg) + L-arginine + ATP = L-arginyl-tRNA(Arg) + AMP + diphosphate. The protein is Arginine--tRNA ligase of Mesomycoplasma hyopneumoniae (strain J / ATCC 25934 / NCTC 10110) (Mycoplasma hyopneumoniae).